Here is a 399-residue protein sequence, read N- to C-terminus: Telomeric repeat-binding factor 2-interacting protein 1 (399 aa).

The segment at Met1–Phe21 is disordered. Position 2 is an N-acetylalanine (Ala2). One can recognise a BRCT domain in the interval Asp10–Leu101. 2 positions are modified to phosphoserine: Ser36 and Ser43. Lys114 is covalently cross-linked (Glycyl lysine isopeptide (Lys-Gly) (interchain with G-Cter in SUMO2)). The region spanning Gln130–Leu190 is the Myb-like domain. Phosphoserine occurs at positions 156 and 158. Lys196 is covalently cross-linked (Glycyl lysine isopeptide (Lys-Gly) (interchain with G-Cter in SUMO2)). Disordered regions lie at residues Leu199–Ile245 and Thr279–Pro309. A phosphoserine mark is found at Ser205 and Ser208. Glycyl lysine isopeptide (Lys-Gly) (interchain with G-Cter in SUMO2) cross-links involve residues Lys210, Lys214, and Lys242. Over residues Cys281–Glu304 the composition is skewed to acidic residues. Lys372 is covalently cross-linked (Glycyl lysine isopeptide (Lys-Gly) (interchain with G-Cter in SUMO2)). The Nuclear localization signal signature appears at Lys383–Lys399.

It belongs to the RAP1 family. Associates with the I-kappa-B-kinase (IKK) core complex, composed of CHUK, IKBKB and IKBKG. Homodimer. Component of the shelterin complex (telosome) composed of TERF1, TERF2, TINF2, TERF2IP ACD and POT1. Interacts with TERF2 (but not TERF1) with its C-terminus. Interacts with SLX4/BTBD12. Interacts with TERF2; the interaction is direct.

The protein resides in the nucleus. The protein localises to the cytoplasm. It is found in the chromosome. It localises to the telomere. Its function is as follows. Acts both as a regulator of telomere function and as a transcription regulator. Involved in the regulation of telomere length and protection as a component of the shelterin complex (telosome). In contrast to other components of the shelterin complex, it is dispensible for telomere capping and does not participate in the protection of telomeres against non-homologous end-joining (NHEJ)-mediated repair. Instead, it is required to negatively regulate telomere recombination and is essential for repressing homology-directed repair (HDR), which can affect telomere length. Does not bind DNA directly: recruited to telomeric double-stranded 5'-TTAGGG-3' repeats via its interaction with TERF2. Independently of its function in telomeres, also acts as a transcription regulator: recruited to extratelomeric 5'-TTAGGG-3' sites via its association with TERF2 or other factors, and regulates gene expression. When cytoplasmic, associates with the I-kappa-B-kinase (IKK) complex and acts as a regulator of the NF-kappa-B signaling by promoting IKK-mediated phosphorylation of RELA/p65, leading to activate expression of NF-kappa-B target genes. The chain is Telomeric repeat-binding factor 2-interacting protein 1 (TERF2IP) from Bos taurus (Bovine).